A 266-amino-acid polypeptide reads, in one-letter code: Undecaprenyl-diphosphatase (266 aa).

Helical transmembrane passes span M1–I21, Q39–F59, W87–I107, L111–A131, V144–T164, A183–V203, A218–L238, and M246–L266.

It belongs to the UppP family.

It is found in the cell inner membrane. The enzyme catalyses di-trans,octa-cis-undecaprenyl diphosphate + H2O = di-trans,octa-cis-undecaprenyl phosphate + phosphate + H(+). Functionally, catalyzes the dephosphorylation of undecaprenyl diphosphate (UPP). Confers resistance to bacitracin. This Shewanella piezotolerans (strain WP3 / JCM 13877) protein is Undecaprenyl-diphosphatase.